The chain runs to 412 residues: Eukaryotic initiation factor 4A-2 (412 aa).

Ala2 is modified (N-acetylalanine). The Q motif signature appears at 39 to 67 (ESFDAMGLQENLLRGIYAYGFEKPSAIQQ). Positions 70-240 (IVPFCKGLDV…RKFMSKPVRI (171 aa)) constitute a Helicase ATP-binding domain. 83–90 (AQSGTGKT) contacts ATP. Thr145 carries the phosphothreonine modification. The short motif at 188–191 (DEAD) is the DEAD box element. The region spanning 251-412 (GIKQFYVNVE…ELPSNVADLL (162 aa)) is the Helicase C-terminal domain.

This sequence belongs to the DEAD box helicase family. eIF4A subfamily. As to quaternary structure, eIF4F is a multi-subunit complex, the composition of which varies with external and internal environmental conditions. It is composed of at least EIF4A, EIF4E and EIF4G. Ubiquitous. Preferentially expressed in flowers, young leaves and roots.

The protein resides in the cytoplasm. It carries out the reaction ATP + H2O = ADP + phosphate + H(+). Functionally, ATP-dependent RNA helicase which is a subunit of the eIF4F complex involved in cap recognition and is required for mRNA binding to ribosome. In the current model of translation initiation, eIF4A unwinds RNA secondary structures in the 5'-UTR of mRNAs which is necessary to allow efficient binding of the small ribosomal subunit, and subsequent scanning for the initiator codon. The sequence is that of Eukaryotic initiation factor 4A-2 (TIF4A-2) from Arabidopsis thaliana (Mouse-ear cress).